We begin with the raw amino-acid sequence, 455 residues long: Ribosomal protein uS12 methylthiotransferase RimO (455 aa).

The MTTase N-terminal domain maps to 30–140 (PTIGMVSLGC…VLDAVHGAVP (111 aa)). The [4Fe-4S] cluster site is built by C39, C75, C104, C171, C175, and C178. Residues 157–386 (LTPRHFSYLK…MEKAQAISEV (230 aa)) form the Radical SAM core domain. In terms of domain architecture, TRAM spans 389–455 (AAKVGRRIEV…GEYDIWGRPV (67 aa)).

This sequence belongs to the methylthiotransferase family. RimO subfamily. The cofactor is [4Fe-4S] cluster.

It is found in the cytoplasm. The catalysed reaction is L-aspartate(89)-[ribosomal protein uS12]-hydrogen + (sulfur carrier)-SH + AH2 + 2 S-adenosyl-L-methionine = 3-methylsulfanyl-L-aspartate(89)-[ribosomal protein uS12]-hydrogen + (sulfur carrier)-H + 5'-deoxyadenosine + L-methionine + A + S-adenosyl-L-homocysteine + 2 H(+). In terms of biological role, catalyzes the methylthiolation of an aspartic acid residue of ribosomal protein uS12. The protein is Ribosomal protein uS12 methylthiotransferase RimO of Cereibacter sphaeroides (strain ATCC 17023 / DSM 158 / JCM 6121 / CCUG 31486 / LMG 2827 / NBRC 12203 / NCIMB 8253 / ATH 2.4.1.) (Rhodobacter sphaeroides).